Reading from the N-terminus, the 447-residue chain is Argininosuccinate synthase (447 aa).

Residues alanine 17–serine 25 and alanine 43 each bind ATP. L-citrulline is bound at residue tyrosine 99. ATP-binding residues include glycine 129 and threonine 131. L-aspartate-binding residues include threonine 131, asparagine 135, and aspartate 136. An L-citrulline-binding site is contributed by asparagine 135. Aspartate 136 contributes to the ATP binding site. L-citrulline-binding residues include arginine 139 and serine 192. Aspartate 194 contacts ATP. The L-citrulline site is built by threonine 201, glutamate 203, and glutamate 280.

The protein belongs to the argininosuccinate synthase family. Type 2 subfamily. Homotetramer.

The protein localises to the cytoplasm. It catalyses the reaction L-citrulline + L-aspartate + ATP = 2-(N(omega)-L-arginino)succinate + AMP + diphosphate + H(+). The protein operates within amino-acid biosynthesis; L-arginine biosynthesis; L-arginine from L-ornithine and carbamoyl phosphate: step 2/3. The sequence is that of Argininosuccinate synthase from Salmonella paratyphi B (strain ATCC BAA-1250 / SPB7).